The sequence spans 620 residues: Translation initiation factor IF-2 (620 aa).

The 170-residue stretch at 126–295 (KRPPIVTIMG…IVTAEIMELK (170 aa)) folds into the tr-type G domain. The G1 stretch occupies residues 135–142 (GHVDHGKT). Residue 135–142 (GHVDHGKT) participates in GTP binding. Positions 160–164 (NITQS) are G2. Residues 181–184 (DTPG) form a G3 region. GTP contacts are provided by residues 181-185 (DTPGH) and 235-238 (NKMD). The segment at 235–238 (NKMD) is G4. The interval 271 to 273 (SAL) is G5.

Belongs to the TRAFAC class translation factor GTPase superfamily. Classic translation factor GTPase family. IF-2 subfamily.

The protein resides in the cytoplasm. Functionally, one of the essential components for the initiation of protein synthesis. Protects formylmethionyl-tRNA from spontaneous hydrolysis and promotes its binding to the 30S ribosomal subunits. Also involved in the hydrolysis of GTP during the formation of the 70S ribosomal complex. This Malacoplasma penetrans (strain HF-2) (Mycoplasma penetrans) protein is Translation initiation factor IF-2.